Reading from the N-terminus, the 342-residue chain is Paired box protein Pax-9 (342 aa).

Positions 4–130 form a DNA-binding region, paired; that stretch reads AFGEVNQLGG…SSISRILRNK (127 aa). The segment at 7 to 63 is PAI subdomain; it reads EVNQLGGVFVNGRPLPNAIRLRIVELAQLGIRPCDISRQLRVSHGCVSKILARYNET. Residues 82 to 130 are RED subdomain; that stretch reads TVVKHIRTYKQRDPGIFAWEIRDRLLADGVCDKYNVPSVSSISRILRNK. Positions 168–189 are interaction with KDM5B; sequence AAAAKVPTPPGVPAIPGSVALP.

As to quaternary structure, interacts with KDM5B. As to expression, in the embryo, expressed in pharyngeal pouches and derivatives, developing vertebral column, tail, head and limbs.

It is found in the nucleus. Transcription factor required for normal development of thymus, parathyroid glands, ultimobranchial bodies, teeth, skeletal elements of skull and larynx as well as distal limbs. This is Paired box protein Pax-9 (Pax9) from Mus musculus (Mouse).